The following is a 729-amino-acid chain: Leucine-rich repeat flightless-interacting protein 1 (729 aa).

N-acetylthreonine is present on Thr2. At Ser16 the chain carries Phosphoserine. Residues 40 to 65 (IRMKELERQQKEVEERPDKDFAEKGS) are compositionally biased toward basic and acidic residues. The tract at residues 40 to 98 (IRMKELERQQKEVEERPDKDFAEKGSRNMPSLSAATLASLGGTSSRRGSGDTSISMDTE) is disordered. The span at 78–94 (SLGGTSSRRGSGDTSIS) shows a compositional bias: low complexity. Phosphoserine occurs at positions 83, 84, 88, 90, 92, and 97. The stretch at 94 to 194 (SMDTEASIRE…LRQREEMLEK (101 aa)) forms a coiled coil. Residue Lys249 forms a Glycyl lysine isopeptide (Lys-Gly) (interchain with G-Cter in SUMO1) linkage. Residues 253 to 729 (VEKVGQRETL…SKSKEDCTMS (477 aa)) form a disordered region. Polar residues predominate over residues 260-272 (ETLQNSEQEQPKP). The span at 277 to 297 (DCVDRGVSHPGEKAENQRPAE) shows a compositional bias: basic and acidic residues. Phosphoserine is present on Ser302. The segment covering 313 to 326 (QQVQSQDQENTSDL) has biased composition (polar residues). Over residues 327–343 (KNSEQIESHKVTNKSDS) the composition is skewed to basic and acidic residues. The span at 344–354 (RASNSPEQSSC) shows a compositional bias: polar residues. Phosphoserine occurs at positions 346 and 348. 2 stretches are compositionally biased toward basic and acidic residues: residues 435 to 445 (KGTENHGESCL) and 482 to 494 (KADD…EKPI). The interval 465 to 567 (EEAIVQIPQA…KNKKKKAATP (103 aa)) is DNA-binding. Residues 506-523 (INQSGHQDTTGPGSTDAQ) show a composition bias toward polar residues. Phosphoserine occurs at positions 538 and 547. The segment covering 550–564 (KKTKNKKKKNKKKKA) has biased composition (basic residues). A compositionally biased stretch (basic and acidic residues) spans 608 to 618 (QKIRAGSREPV). Phosphoserine is present on residues Ser614 and Ser670. 2 stretches are compositionally biased toward polar residues: residues 667–684 (CDTS…SQHG) and 693–710 (LDNS…SESG). Residues 713-729 (AREEVGNSKSKEDCTMS) are compositionally biased toward basic and acidic residues.

The protein belongs to the LRRFIP family. Homodimer. May also form higher oligomers. Interacts with FLII. Interacts with MYD88. Competes with FLII for MyD88-binding, even in the absence of LPS. In terms of tissue distribution, ubiquitously expressed.

It localises to the nucleus. Its subcellular location is the cytoplasm. Transcriptional repressor which preferentially binds to the GC-rich consensus sequence (5'-AGCCCCCGGCG-3') and may regulate expression of TNF, EGFR and PDGFA. May control smooth muscle cells proliferation following artery injury through PDGFA repression. May also bind double-stranded RNA. Positively regulates Toll-like receptor (TLR) signaling in response to agonist probably by competing with the negative FLII regulator for MYD88-binding. This chain is Leucine-rich repeat flightless-interacting protein 1 (Lrrfip1), found in Mus musculus (Mouse).